The primary structure comprises 146 residues: Large ribosomal subunit protein uL13 (146 aa).

The protein belongs to the universal ribosomal protein uL13 family. Part of the 50S ribosomal subunit.

Its function is as follows. This protein is one of the early assembly proteins of the 50S ribosomal subunit, although it is not seen to bind rRNA by itself. It is important during the early stages of 50S assembly. The protein is Large ribosomal subunit protein uL13 of Methylobacillus flagellatus (strain ATCC 51484 / DSM 6875 / VKM B-1610 / KT).